The following is a 561-amino-acid chain: Foot protein 1 variant 1 (561 aa).

An N-terminal signal peptide occupies residues 1–20 (MARNMNILTLFAVLIGSASA). Tyr-22 carries the 3',4'-dihydroxyphenylalanine modification. Pro-33 bears the 4-hydroxyproline mark. An A-1; approximate repeat occupies 41-50 (VHPPAWTAWK). The interval 41 to 410 (VHPPAWTAWK…APPPAWTAWK (370 aa)) is 13 X 10 AA A-P-P-P-A-W-T-A-W-K. Residues Trp-46, Trp-49, Trp-56, and Trp-59 each carry the 7'-hydroxytryptophan modification. C-linked (Man) hydroxytryptophan glycosylation is found at Trp-46, Trp-49, Trp-56, and Trp-59. The A-2; approximate repeat unit spans residues 51–60 (AHPPAWTAWK). A B-1 repeat occupies 61–70 (ATPKPWTAWK). Residues 61-440 (ATPKPWTAWK…ATPKPWTAWR (380 aa)) are 27 X 10 AA A-T-P-K-P-W-T-A-W-K. Pro-65 bears the 4-hydroxyproline mark. Trp-66 is a glycosylation site (C-linked (Man) tryptophan). Position 69 is a 7'-hydroxytryptophan (Trp-69). C-linked (Man) hydroxytryptophan glycosylation occurs at Trp-69. The stretch at 71 to 80 (APPPAWTAWK) is one A-3 repeat. A 4-hydroxyproline mark is found at Pro-72, Pro-73, and Pro-74. Residues Trp-76 and Trp-79 each carry the 7'-hydroxytryptophan modification. C-linked (Man) hydroxytryptophan glycans are attached at residues Trp-76 and Trp-79. A B-2 repeat occupies 81–90 (ATPKPWTAWK). Pro-85 bears the 4-hydroxyproline mark. Residue Trp-86 is glycosylated (C-linked (Man) tryptophan). 7'-hydroxytryptophan is present on Trp-89. C-linked (Man) hydroxytryptophan glycosylation occurs at Trp-89. The stretch at 91 to 100 (APPPTWTAWK) is one A-4; approximate repeat. 3 positions are modified to 4-hydroxyproline: Pro-92, Pro-93, and Pro-94. 2 positions are modified to 7'-hydroxytryptophan: Trp-96 and Trp-99. Trp-96 and Trp-99 each carry a C-linked (Man) hydroxytryptophan glycan. The B-3 repeat unit spans residues 101 to 110 (ATPKPWTAWK). Pro-105 carries the 4-hydroxyproline modification. The C-linked (Man) tryptophan glycan is linked to Trp-106. A 7'-hydroxytryptophan modification is found at Trp-109. C-linked (Man) hydroxytryptophan glycosylation is present at Trp-109. The A-5 repeat unit spans residues 111–120 (APPPAWTAWK). Residues Pro-112, Pro-113, and Pro-114 each carry the 4-hydroxyproline modification. 2 positions are modified to 7'-hydroxytryptophan: Trp-116 and Trp-119. Trp-116 and Trp-119 each carry a C-linked (Man) hydroxytryptophan glycan. Residues 121–130 (ATLKPWTAWK) form a B-4; approximate repeat. Pro-125 is subject to 4-hydroxyproline. A glycan (C-linked (Man) tryptophan) is linked at Trp-126. The residue at position 129 (Trp-129) is a 7'-hydroxytryptophan. The C-linked (Man) hydroxytryptophan glycan is linked to Trp-129. Residues 131–140 (ATPKPWTAWK) form a B-5 repeat. Pro-135 carries the 4-hydroxyproline modification. A C-linked (Man) tryptophan glycan is attached at Trp-136. Trp-139 bears the 7'-hydroxytryptophan mark. Trp-139 is a glycosylation site (C-linked (Man) hydroxytryptophan). One copy of the B-6 repeat lies at 141–150 (ATPKPWTAWK). Pro-145 carries the 4-hydroxyproline modification. Trp-146 is a glycosylation site (C-linked (Man) tryptophan). Trp-149 carries the post-translational modification 7'-hydroxytryptophan. C-linked (Man) hydroxytryptophan glycosylation is present at Trp-149. One copy of the B-7 repeat lies at 151 to 160 (ATPKPWTAWK). At Pro-155 the chain carries 4-hydroxyproline. A C-linked (Man) tryptophan glycan is attached at Trp-156. A 7'-hydroxytryptophan modification is found at Trp-159. Trp-159 carries a C-linked (Man) hydroxytryptophan glycan. Residues 161 to 170 (ATPKPWTAWK) form a B-8 repeat. At Pro-165 the chain carries 4-hydroxyproline. A glycan (C-linked (Man) tryptophan) is linked at Trp-166. Trp-169 bears the 7'-hydroxytryptophan mark. Trp-169 carries C-linked (Man) hydroxytryptophan glycosylation. The stretch at 171-180 (ATPKPWTVWK) is one B-9; approximate repeat. 4-hydroxyproline is present on Pro-175. Trp-176 is a glycosylation site (C-linked (Man) tryptophan). Trp-179 is modified (7'-hydroxytryptophan). Trp-179 carries a C-linked (Man) hydroxytryptophan glycan. The B-10 repeat unit spans residues 181-190 (ATPKPWTAWK). 4-hydroxyproline is present on Pro-185. Trp-186 carries a C-linked (Man) tryptophan glycan. At Trp-189 the chain carries 7'-hydroxytryptophan. A glycan (C-linked (Man) hydroxytryptophan) is linked at Trp-189. A B-11 repeat occupies 191-200 (ATPKPWTAWK). Residue Pro-195 is modified to 4-hydroxyproline. Trp-196 carries a C-linked (Man) tryptophan glycan. Trp-199 carries the 7'-hydroxytryptophan modification. Trp-199 carries a C-linked (Man) hydroxytryptophan glycan. An A-6; approximate repeat occupies 201–210 (APPPAWSAWK). 3 positions are modified to 4-hydroxyproline: Pro-202, Pro-203, and Pro-204. 2 positions are modified to 7'-hydroxytryptophan: Trp-206 and Trp-209. C-linked (Man) hydroxytryptophan glycosylation is found at Trp-206 and Trp-209. Residues 211–220 (ATPKPWTVWK) form a B-12; approximate repeat. Pro-215 bears the 4-hydroxyproline mark. Residue Trp-216 is glycosylated (C-linked (Man) tryptophan). The residue at position 219 (Trp-219) is a 7'-hydroxytryptophan. Trp-219 carries C-linked (Man) hydroxytryptophan glycosylation. One copy of the B-13 repeat lies at 221–230 (ATPKPWTAWK). 4-hydroxyproline is present on Pro-225. C-linked (Man) tryptophan glycosylation occurs at Trp-226. Trp-229 is subject to 7'-hydroxytryptophan. The C-linked (Man) hydroxytryptophan glycan is linked to Trp-229. The stretch at 231-240 (ATPKPWTAWK) is one B-14 repeat. At Pro-235 the chain carries 4-hydroxyproline. C-linked (Man) tryptophan glycosylation is present at Trp-236. Trp-239 bears the 7'-hydroxytryptophan mark. Residue Trp-239 is glycosylated (C-linked (Man) hydroxytryptophan). Residues 241–250 (ATPKPWTVWK) form a B-15; approximate repeat. Pro-245 is modified (4-hydroxyproline). A C-linked (Man) tryptophan glycan is attached at Trp-246. Position 249 is a 7'-hydroxytryptophan (Trp-249). A C-linked (Man) hydroxytryptophan glycan is attached at Trp-249. One copy of the B-16 repeat lies at 251–260 (ATPKPWTAWK). 4-hydroxyproline is present on Pro-255. Trp-256 carries a C-linked (Man) tryptophan glycan. The residue at position 259 (Trp-259) is a 7'-hydroxytryptophan. C-linked (Man) hydroxytryptophan glycosylation is present at Trp-259. An A-7 repeat occupies 261 to 270 (APPPAWTAWK). A 4-hydroxyproline mark is found at Pro-262, Pro-263, and Pro-264. 7'-hydroxytryptophan occurs at positions 266 and 269. 2 C-linked (Man) hydroxytryptophan glycosylation sites follow: Trp-266 and Trp-269. Residues 271-280 (ATPKPWTAWK) form a B-17 repeat. Pro-275 bears the 4-hydroxyproline mark. Residue Trp-276 is glycosylated (C-linked (Man) tryptophan). 7'-hydroxytryptophan is present on Trp-279. A C-linked (Man) hydroxytryptophan glycan is attached at Trp-279. One copy of the A-8; approximate repeat lies at 281–290 (APPPTWTAWK). A 4-hydroxyproline mark is found at Pro-282, Pro-283, and Pro-284. 7'-hydroxytryptophan is present on residues Trp-286 and Trp-289. Trp-286 and Trp-289 each carry a C-linked (Man) hydroxytryptophan glycan. The stretch at 291–300 (ATPKPWTAWK) is one B-18 repeat. Pro-295 bears the 4-hydroxyproline mark. Trp-296 is a glycosylation site (C-linked (Man) tryptophan). Trp-299 bears the 7'-hydroxytryptophan mark. Residue Trp-299 is glycosylated (C-linked (Man) hydroxytryptophan). One copy of the A-9; approximate repeat lies at 301–310 (APPPAWSAWK). Pro-302, Pro-303, and Pro-304 each carry 4-hydroxyproline. 2 positions are modified to 7'-hydroxytryptophan: Trp-306 and Trp-309. Trp-306 and Trp-309 each carry a C-linked (Man) hydroxytryptophan glycan. One copy of the B-19 repeat lies at 311–320 (ATPKPWTAWK). 4-hydroxyproline is present on Pro-315. C-linked (Man) tryptophan glycosylation occurs at Trp-316. Trp-319 is subject to 7'-hydroxytryptophan. Trp-319 carries C-linked (Man) hydroxytryptophan glycosylation. A B-20 repeat occupies 321–330 (ATPKPWTAWK). At Pro-325 the chain carries 4-hydroxyproline. Residue Trp-326 is glycosylated (C-linked (Man) tryptophan). At Trp-329 the chain carries 7'-hydroxytryptophan. Residue Trp-329 is glycosylated (C-linked (Man) hydroxytryptophan). The stretch at 331–340 (ATPKPWTAWK) is one B-21 repeat. Residue Pro-335 is modified to 4-hydroxyproline. A glycan (C-linked (Man) tryptophan) is linked at Trp-336. 7'-hydroxytryptophan is present on Trp-339. The C-linked (Man) hydroxytryptophan glycan is linked to Trp-339. One copy of the B-22 repeat lies at 341–350 (ATPKPWTAWK). Residue Pro-345 is modified to 4-hydroxyproline. The C-linked (Man) tryptophan glycan is linked to Trp-346. Trp-349 is modified (7'-hydroxytryptophan). C-linked (Man) hydroxytryptophan glycosylation occurs at Trp-349. An A-10; approximate repeat occupies 351–360 (VPPPAWTAWK). Residues Pro-352, Pro-353, and Pro-354 each carry the 4-hydroxyproline modification. Trp-356, Trp-359, Trp-366, and Trp-369 each carry 7'-hydroxytryptophan. C-linked (Man) hydroxytryptophan glycans are attached at residues Trp-356, Trp-359, Trp-366, and Trp-369. An A-11; approximate repeat occupies 361–370 (AHPPAWTAWK). The stretch at 371–380 (ATPKPWTAWK) is one B-23 repeat. The residue at position 375 (Pro-375) is a 4-hydroxyproline. Trp-376 carries C-linked (Man) tryptophan glycosylation. Trp-379 carries the post-translational modification 7'-hydroxytryptophan. C-linked (Man) hydroxytryptophan glycosylation is present at Trp-379. Residues 381 to 390 (APPPAWTAWK) form an A-12 repeat. 4-hydroxyproline is present on residues Pro-382, Pro-383, and Pro-384. 7'-hydroxytryptophan occurs at positions 386 and 389. 2 C-linked (Man) hydroxytryptophan glycosylation sites follow: Trp-386 and Trp-389. One copy of the B-24 repeat lies at 391-400 (ATPKPWTAWK). Residue Pro-395 is modified to 4-hydroxyproline. Trp-396 carries a C-linked (Man) tryptophan glycan. Trp-399 carries the post-translational modification 7'-hydroxytryptophan. The C-linked (Man) hydroxytryptophan glycan is linked to Trp-399. One copy of the A-13 repeat lies at 401-410 (APPPAWTAWK). 4-hydroxyproline is present on residues Pro-402, Pro-403, and Pro-404. Trp-406 and Trp-409 each carry 7'-hydroxytryptophan. C-linked (Man) hydroxytryptophan glycans are attached at residues Trp-406 and Trp-409. The stretch at 411–420 (ATPKPWTAWK) is one B-25 repeat. Pro-415 is subject to 4-hydroxyproline. C-linked (Man) tryptophan glycosylation is present at Trp-416. Trp-419 carries the post-translational modification 7'-hydroxytryptophan. C-linked (Man) hydroxytryptophan glycosylation occurs at Trp-419. The stretch at 421 to 430 (ATPKPWTVWK) is one B-26; approximate repeat. Position 425 is a 4-hydroxyproline (Pro-425). C-linked (Man) tryptophan glycosylation occurs at Trp-426. Trp-429 carries the 7'-hydroxytryptophan modification. A glycan (C-linked (Man) hydroxytryptophan) is linked at Trp-429. The B-27; approximate repeat unit spans residues 431–440 (ATPKPWTAWR). Residue Pro-435 is modified to 4-hydroxyproline. Trp-436 carries C-linked (Man) tryptophan glycosylation. The residue at position 439 (Trp-439) is a 7'-hydroxytryptophan. Trp-439 is a glycosylation site (C-linked (Man) hydroxytryptophan). Residues 452–507 (GHGYGGYGKPGKPGKPGSKGPRGPAGPPGATGKTGRTGATGKRGPPGYPGKPGVPG) form a disordered region. Residues 453–462 (HGYGGYGKPG) show a composition bias toward gly residues. The region spanning 459-510 (GKPGKPGKPGSKGPRGPAGPPGATGKTGRTGATGKRGPPGYPGKPGVPGRNG) is the Collagen-like domain. A compositionally biased stretch (low complexity) spans 466 to 496 (KPGSKGPRGPAGPPGATGKTGRTGATGKRGP). A 4-hydroxyproline mark is found at Pro-497, Pro-500, and Pro-506.

In terms of tissue distribution, produced by the byssal gland.

It localises to the secreted. Its function is as follows. Provides adhesiveness to the mussel's foot. Mussels produce one of the strongest water insoluble glues. The mussel's adhesive is a bundle of threads, called a byssus, formed by a fibrous collagenous core coated with adhesive proteins. The chain is Foot protein 1 variant 1 from Perna viridis (Asian green mussel).